The chain runs to 354 residues: Uroporphyrinogen decarboxylase (354 aa).

Substrate contacts are provided by residues 27-31 (RQAGR), Asp77, Tyr154, Ser209, and His327.

It belongs to the uroporphyrinogen decarboxylase family. As to quaternary structure, homodimer.

Its subcellular location is the cytoplasm. It carries out the reaction uroporphyrinogen III + 4 H(+) = coproporphyrinogen III + 4 CO2. Its pathway is porphyrin-containing compound metabolism; protoporphyrin-IX biosynthesis; coproporphyrinogen-III from 5-aminolevulinate: step 4/4. In terms of biological role, catalyzes the decarboxylation of four acetate groups of uroporphyrinogen-III to yield coproporphyrinogen-III. This is Uroporphyrinogen decarboxylase from Shewanella sp. (strain ANA-3).